The sequence spans 88 residues: Centromere protein W (88 aa).

This sequence belongs to the CENP-W/WIP1 family. As to quaternary structure, heterodimer with CENPT; this dimer coassembles with CENPS-CENPX heterodimers at centromeres to form the tetrameric CENP-T-W-S-X complex, which is a subcomplex of the large constitutive centromere-associated network (CCAN, also known as the interphase centromere complex or ICEN). Interacts with NPM1. In terms of tissue distribution, highly expressed in ovary, liver, lung and pancreas and to a lower extent in breast and gastrointestinal tract cancers; such as those of the colon, rectum and stomach. Overexpressed in high grade breast invasive tumors. Expressed in many cancer cell types.

The protein localises to the nucleus. It is found in the chromosome. It localises to the centromere. Its subcellular location is the kinetochore. The protein resides in the nucleus matrix. The protein localises to the nucleolus. Functionally, component of the CENPA-NAC (nucleosome-associated) complex, a complex that plays a central role in assembly of kinetochore proteins, mitotic progression and chromosome segregation. The CENPA-NAC complex recruits the CENPA-CAD (nucleosome distal) complex and may be involved in incorporation of newly synthesized CENPA into centromeres. Part of a nucleosome-associated complex that binds specifically to histone H3-containing nucleosomes at the centromere, as opposed to nucleosomes containing CENPA. Component of the heterotetrameric CENP-T-W-S-X complex that binds and supercoils DNA, and plays an important role in kinetochore assembly. CENPW has a fundamental role in kinetochore assembly and function. It is one of the inner kinetochore proteins, with most further proteins binding downstream. Required for normal chromosome organization and normal progress through mitosis. The chain is Centromere protein W (CENPW) from Homo sapiens (Human).